The primary structure comprises 547 residues: TBCC domain-containing protein 1 (547 aa).

Positions 304-435 (PHTHRMVVMS…LEDHMAHTGL (132 aa)) constitute a C-CAP/cofactor C-like domain.

The protein belongs to the TBCC family.

It localises to the cytoplasm. It is found in the cytoskeleton. The protein resides in the microtubule organizing center. The protein localises to the centrosome. Its subcellular location is the spindle pole. Its function is as follows. May play a role in the regulation of centrosome and Golgi apparatus positioning. This is TBCC domain-containing protein 1 (tbccd1) from Xenopus tropicalis (Western clawed frog).